The chain runs to 593 residues: CTD kinase subunit alpha (593 aa).

Polar residues-rich tracts occupy residues 1–17 (MSYSKSTIYRRQGTEPN) and 29–51 (QLSGTNEESLGGHTLSSNAFKNN). The tract at residues 1 to 262 (MSYSKSTIYR…ESVPAPLPSP (262 aa)) is disordered. Serine 56 and serine 58 each carry phosphoserine. The span at 90-103 (RSRKSRRRKGKKAF) shows a compositional bias: basic residues. A phosphoserine mark is found at serine 104 and serine 109. Residues 139-152 (SSSSASVSPISPSA) show a composition bias toward low complexity. A compositionally biased stretch (polar residues) spans 160–170 (QASSFRRSPPS). Low complexity predominate over residues 198 to 215 (IPHETTSSDTQKKSSVSS). Residues 277–561 (YEKIDQIGEG…AHETLMHEYF (285 aa)) enclose the Protein kinase domain. Residues 283 to 291 (IGEGTYGKV) and lysine 306 each bind ATP. Aspartate 399 serves as the catalytic Proton acceptor.

It belongs to the protein kinase superfamily. CMGC Ser/Thr protein kinase family. CDC2/CDKX subfamily. As to quaternary structure, CTDK-I consists of three subunits, ctk1/lsk1, ctk2/lsc1 and ctk3 (also called alpha, beta and gamma). Interacts with ctk2/lsc1. This interaction is dependent on kinase activity.

Its subcellular location is the nucleus. It is found in the nucleolus. The catalysed reaction is [DNA-directed RNA polymerase] + ATP = phospho-[DNA-directed RNA polymerase] + ADP + H(+). Its function is as follows. Catalytic subunit of the CTDK-I complex, which hyperphosphorylates the C-terminal heptapeptide repeat domain (CTD) of the largest RNA polymerase II subunit. Involved in RNA polymerase II transcriptional elongation and pre-mRNA 3'-end processing. Together with ctk2/lsc1, required for the regulation of cytokinesis by phosphorylating 'Ser-2' residues found in the heptad repeats of the CTD. Required for nuclear localization of ctk2/lsc1. Positively regulates the septation initiation network (SIN) and promotes successful completion of cytokinesis in response to perturbation of the actomyosin ring. Acts in parallel to clp1 to promote actomyosin ring stability upon cytokinesis checkpoint activation. The sequence is that of CTD kinase subunit alpha from Schizosaccharomyces pombe (strain 972 / ATCC 24843) (Fission yeast).